The primary structure comprises 388 residues: Dual-specificity RNA methyltransferase RlmN (388 aa).

Catalysis depends on glutamate 109, which acts as the Proton acceptor. The Radical SAM core domain maps to 115–354; it reads EDDRATLCVS…TIVRKTRGDD (240 aa). A disulfide bridge connects residues cysteine 122 and cysteine 359. Cysteine 129, cysteine 133, and cysteine 136 together coordinate [4Fe-4S] cluster. S-adenosyl-L-methionine-binding positions include 183–184, serine 215, 237–239, and asparagine 316; these read GE and SLH. Cysteine 359 functions as the S-methylcysteine intermediate in the catalytic mechanism.

It belongs to the radical SAM superfamily. RlmN family. The cofactor is [4Fe-4S] cluster.

Its subcellular location is the cytoplasm. It catalyses the reaction adenosine(2503) in 23S rRNA + 2 reduced [2Fe-2S]-[ferredoxin] + 2 S-adenosyl-L-methionine = 2-methyladenosine(2503) in 23S rRNA + 5'-deoxyadenosine + L-methionine + 2 oxidized [2Fe-2S]-[ferredoxin] + S-adenosyl-L-homocysteine. The catalysed reaction is adenosine(37) in tRNA + 2 reduced [2Fe-2S]-[ferredoxin] + 2 S-adenosyl-L-methionine = 2-methyladenosine(37) in tRNA + 5'-deoxyadenosine + L-methionine + 2 oxidized [2Fe-2S]-[ferredoxin] + S-adenosyl-L-homocysteine. In terms of biological role, specifically methylates position 2 of adenine 2503 in 23S rRNA and position 2 of adenine 37 in tRNAs. m2A2503 modification seems to play a crucial role in the proofreading step occurring at the peptidyl transferase center and thus would serve to optimize ribosomal fidelity. This is Dual-specificity RNA methyltransferase RlmN from Cronobacter sakazakii (strain ATCC BAA-894) (Enterobacter sakazakii).